Consider the following 643-residue polypeptide: MPLLFLERFPWPSLRTYTGLSGLALLGTIISAYRALSQPEAGPGEPDQLTASLQPEPPAPARPSAGGPRARDVAQYLLSDSLFVWVLVNTACCVLMLVAKLIQCIVFGPLRVSERQHLKDKFWNFIFYKFIFIFGVLNVQTVEEVVMWCLWFAGLVFLHLMVQLCKDRFEYLSFSPTTPMSSHGRVLSLLVAMLLSCCGLAAVCSITGYTHGMHTLAFMAAESLLVTVRTAHVILRYVIHLWDLNHEGTWEGKGTYVYYTDFVMELTLLSLDLMHHIHMLLFGNIWLSMASLVIFMQLRYLFHEVQRRIRRHKNYLRVVGNMEARFAVATPEELAVNNDDCAICWDSMQAARKLPCGHLFHNSCLRSWLEQDTSCPTCRMSLNIADNNRVREEHQGENLDENLVPVAAAEGRPRLNQHNHFFHFDGSRIASWLPSFSVEVMHTTNILGITQASNSQLNAMAHQIQEMFPQVPYHLVLQDLQLTRSVEITTDNILEGRIQVPFPTQRSDSIRPALNSPVERPSSDQEEGETSAQTERVPLDLSPRLEETLDFGEVEVEPSEVEDFEARGSRFSKSADERQRMLVQRKDELLQQARKRFLNKSSEDDAASESFLPSEGASSDPVTLRRRMLAAAAERRLQKQQTS.

The disordered stretch occupies residues 39–67 (PEAGPGEPDQLTASLQPEPPAPARPSAGG). 6 helical membrane-spanning segments follow: residues 82–102 (LFVWVLVNTACCVLMLVAKLI), 122–142 (FWNFIFYKFIFIFGVLNVQTV), 145–165 (VVMWCLWFAGLVFLHLMVQLC), 186–206 (VLSLLVAMLLSCCGLAAVCSI), 215–235 (TLAFMAAESLLVTVRTAHVIL), and 276–296 (HIHMLLFGNIWLSMASLVIFM). An RING-type zinc finger spans residues 341–379 (CAICWDSMQAARKLPCGHLFHNSCLRSWLEQDTSCPTCR). Residues 429 to 449 (IASWLPSFSVEVMHTTNILGI) form a helical membrane-spanning segment. One can recognise a CUE domain in the interval 456–498 (QLNAMAHQIQEMFPQVPYHLVLQDLQLTRSVEITTDNILEGRI). Disordered stretches follow at residues 504–579 (TQRS…DERQ) and 596–624 (RFLNKSSEDDAASESFLPSEGASSDPVTL). Residues serine 516, serine 523, and serine 542 each carry the phosphoserine modification. Over residues 548 to 563 (TLDFGEVEVEPSEVED) the composition is skewed to acidic residues. Basic and acidic residues predominate over residues 564 to 579 (FEARGSRFSKSADERQ). The interval 622-640 (VTLRRRMLAAAAERRLQKQ) is VCP/p97-interacting motif (VIM).

As to quaternary structure, interacts with RNF5. Also forms an ERAD complex containing VCP/p97, NGLY1; PSMC1; SAKS1 and RAD23B required for coupling retrotranslocation, ubiquitination and deglycosylation. Interacts with DERL1. Interacts (through a region distinct from the RING finger) with UBE2G2/UBC7. Component of the VCP/p97-AMFR/gp78 complex that enhances VCP/p97 binding to polyubiquitinated proteins for their degradation by the endoplasmic reticulum-associated degradation (ERAD) pathway. Interacts (via the VIM) with VCP/p97. Interacts (via its membrane domain) with INSIG1; the interaction initiates the sterol-mediated ubiquitination and degradation of HMGCR by the ERAD pathway. Interacts with AUP1, UBE2G2 and RNF139/TRC8; interaction with AUP1 facilitates interaction of AMFR with ubiquitin-conjugating enzyme UBE2G2 and ubiquitin ligase RNF139, leading to sterol-induced ubiquitination of HMGCR and its subsequent proteasomal degradation. Interacts with BAG6. Interacts with USP13 (via UBA 2 domain); the interaction is direct. Interacts with LMBR1L. Interacts with UBAC2 and CTNNB1. Interacts with C18orf32. In terms of assembly, (Microbial infection) Interacts with Staphylococcus aureus HIgB; this interaction regulates AMFR-mediated inflammation by promoting TAB3 ubiquitination to promote TAB3-TAK1 complex formation. In terms of processing, palmitoylation of the RING-type zing finger by ZDHHC6 promotes localization to the peripheral endoplasmic reticulum. In terms of tissue distribution, widely expressed.

Its subcellular location is the endoplasmic reticulum membrane. The catalysed reaction is [E2 ubiquitin-conjugating enzyme]-S-ubiquitinyl-L-cysteine + [acceptor protein]-L-cysteine = [E2 ubiquitin-conjugating enzyme]-L-cysteine + [acceptor protein]-S-ubiquitinyl-L-cysteine.. The protein operates within protein modification; protein ubiquitination. Its function is as follows. E3 ubiquitin-protein ligase that mediates the polyubiquitination of lysine and cysteine residues on target proteins, such as CD3D, CYP3A4, CFTR, INSIG1, SOAT2/ACAT2 and APOB for proteasomal degradation. Component of a VCP/p97-AMFR/gp78 complex that participates in the final step of endoplasmic reticulum-associated degradation (ERAD). The VCP/p97-AMFR/gp78 complex is involved in the sterol-accelerated ERAD degradation of HMGCR through binding to the HMGCR-INSIG1 complex at the ER membrane. In addition, interaction of AMFR with AUP1 facilitates interaction of AMFR with ubiquitin-conjugating enzyme UBE2G2 and ubiquitin ligase RNF139, leading to sterol-induced HMGCR ubiquitination. The ubiquitinated HMGCR is then released from the ER into the cytosol for subsequent destruction. In addition to ubiquitination on lysine residues, catalyzes ubiquitination on cysteine residues: together with INSIG1, mediates polyubiquitination of SOAT2/ACAT2 at 'Cys-277', leading to its degradation when the lipid levels are low. Catalyzes ubiquitination and subsequent degradation of INSIG1 when cells are depleted of sterols. Mediates polyubiquitination of INSIG2 at 'Cys-215' in some tissues, leading to its degradation. Also regulates ERAD through the ubiquitination of UBL4A a component of the BAG6/BAT3 complex. Also acts as a scaffold protein to assemble a complex that couples ubiquitination, retranslocation and deglycosylation. Mediates tumor invasion and metastasis as a receptor for the GPI/autocrine motility factor. In association with LMBR1L and UBAC2, negatively regulates the canonical Wnt signaling pathway in the lymphocytes by promoting the ubiquitin-mediated degradation of CTNNB1 and Wnt receptors FZD6 and LRP6. Regulates NF-kappa-B and MAPK signaling pathways by mediating 'Lys-27'-linked polyubiquitination of TAB3 and promoting subsequent TAK1/MAP3K7 activation. Required for proper lipid homeostasis. The sequence is that of E3 ubiquitin-protein ligase AMFR from Homo sapiens (Human).